Reading from the N-terminus, the 278-residue chain is Biotin synthase (278 aa).

In terms of domain architecture, Radical SAM core spans 1-227 (MQIMLCAISN…NAHIMVAGGR (227 aa)). Residues Cys-16, Cys-20, and Cys-23 each coordinate [4Fe-4S] cluster. [2Fe-2S] cluster is bound by residues Cys-60, Cys-95, and Cys-153.

It belongs to the radical SAM superfamily. Biotin synthase family. As to quaternary structure, homodimer. [4Fe-4S] cluster serves as cofactor. The cofactor is [2Fe-2S] cluster.

The enzyme catalyses (4R,5S)-dethiobiotin + (sulfur carrier)-SH + 2 reduced [2Fe-2S]-[ferredoxin] + 2 S-adenosyl-L-methionine = (sulfur carrier)-H + biotin + 2 5'-deoxyadenosine + 2 L-methionine + 2 oxidized [2Fe-2S]-[ferredoxin]. It participates in cofactor biosynthesis; biotin biosynthesis; biotin from 7,8-diaminononanoate: step 2/2. Its function is as follows. Catalyzes the conversion of dethiobiotin (DTB) to biotin by the insertion of a sulfur atom into dethiobiotin via a radical-based mechanism. This chain is Biotin synthase, found in Campylobacter lari (strain RM2100 / D67 / ATCC BAA-1060).